A 196-amino-acid chain; its full sequence is MGYYAFERLIPVVHPTAFVHPSAVLIGDVIVGAGVYIGPLASLRGDYGRLIVQAGANIQDGCIMHGYCDTDTIVGENGHIGHGAILHGCVIGRDALVGMNSVIMDGAVIGEESIVAAMSFVKAGFSGEKRQLLMGTPARAVRSVSDDELRWKHLNTKEYQDLVGRCHVALHETQPLRQMEENRPRLQGTTDVAPKR.

The tract at residues 176 to 196 is disordered; it reads LRQMEENRPRLQGTTDVAPKR.

The protein belongs to the transferase hexapeptide repeat family.

It functions in the pathway amine and polyamine metabolism; carnitine metabolism. Its function is as follows. Overproduction of CaiE stimulates the activity of CaiB and CaiD. The sequence is that of Carnitine operon protein CaiE from Escherichia fergusonii (strain ATCC 35469 / DSM 13698 / CCUG 18766 / IAM 14443 / JCM 21226 / LMG 7866 / NBRC 102419 / NCTC 12128 / CDC 0568-73).